Reading from the N-terminus, the 884-residue chain is Lon protease homolog 2, peroxisomal (884 aa).

The Lon N-terminal domain maps to 12 to 255 (LAILPFRNKV…KATELVDRHL (244 aa)). A disordered region spans residues 67-101 (SLLSPGVGSDSGEGGSKAPGGSAGESTKQDTKNGK). Positions 75–89 (SDSGEGGSKAPGGSA) are enriched in gly residues. ATP is bound at residue 408 to 415 (GPPGVGKT). The region spanning 689–874 (VASPGVSVGL…EEVLDHAFEG (186 aa)) is the Lon proteolytic domain. Residues S780 and K823 contribute to the active site. The Microbody targeting signal signature appears at 882–884 (SKL).

It belongs to the peptidase S16 family.

The protein localises to the peroxisome matrix. The catalysed reaction is Hydrolysis of proteins in presence of ATP.. In terms of biological role, ATP-dependent serine protease that mediates the selective degradation of misfolded and unassembled polypeptides in the peroxisomal matrix. Necessary for type 2 peroxisome targeting signal (PTS2)-containing protein processing and facilitates peroxisome matrix protein import. The chain is Lon protease homolog 2, peroxisomal from Oryza sativa subsp. japonica (Rice).